Reading from the N-terminus, the 445-residue chain is Competence protein E (445 aa).

The first 23 residues, 1–23 (MKKYFLKCGYFLVCFCLPLIVFA), serve as a signal peptide directing secretion.

It belongs to the bacterial secretin family. PilQ subfamily.

It is found in the cell outer membrane. Functionally, involved in transformation (genetic competence for DNA uptake). The protein is Competence protein E (comE) of Haemophilus influenzae (strain ATCC 51907 / DSM 11121 / KW20 / Rd).